A 469-amino-acid chain; its full sequence is MEAQTLYEKLWSSHVVHQEADGTALIYIDRHLIHEVTSPQAFEGLKLAGRKPWRVSSIVATADHNTPTDHWERGILDPVSRQQVETLDANIREVGALAYFPFRDARQGIVHVIGPEIGATLPGMTVVCGDSHTSTHGAFACLAHGIGTSEVEHVLATQCLLQKRSKTMLVRVDGELGRGVSAKDIALAIIGRLGTAGGTGYAIEFGGSAIRALSMEGRMTICNMAIEAGARAGLVAVDQTTIDYLRDKPLAPKGQAWEQAVAYWRTLKTDDGAKFDKIVELDAAQIQPQVTWGTSPEMVETVSGRVPDPAGIGDPVRREGIERALKYMGLAPNTPISEIPVDQVFIGSCTNSRIEDLREAASVAKGRSKAPSVKRVLVVPGSGLVKRQAEAEGLHEVFLAAGFEWREPGCSMCLAMNADRLEPGEHCASTSNRNFEGRQGAGGRTHLVSPAMAAAAAVVGHFIDVRELA.

[4Fe-4S] cluster-binding residues include cysteine 349, cysteine 410, and cysteine 413.

This sequence belongs to the aconitase/IPM isomerase family. LeuC type 1 subfamily. As to quaternary structure, heterodimer of LeuC and LeuD. Requires [4Fe-4S] cluster as cofactor.

The catalysed reaction is (2R,3S)-3-isopropylmalate = (2S)-2-isopropylmalate. The protein operates within amino-acid biosynthesis; L-leucine biosynthesis; L-leucine from 3-methyl-2-oxobutanoate: step 2/4. Its function is as follows. Catalyzes the isomerization between 2-isopropylmalate and 3-isopropylmalate, via the formation of 2-isopropylmaleate. The protein is 3-isopropylmalate dehydratase large subunit of Aromatoleum aromaticum (strain DSM 19018 / LMG 30748 / EbN1) (Azoarcus sp. (strain EbN1)).